The primary structure comprises 689 residues: Glycine--tRNA ligase beta subunit (689 aa).

Belongs to the class-II aminoacyl-tRNA synthetase family. As to quaternary structure, tetramer of two alpha and two beta subunits.

The protein localises to the cytoplasm. The enzyme catalyses tRNA(Gly) + glycine + ATP = glycyl-tRNA(Gly) + AMP + diphosphate. This Shewanella woodyi (strain ATCC 51908 / MS32) protein is Glycine--tRNA ligase beta subunit.